A 304-amino-acid chain; its full sequence is MTSTLPFVSVIIPVYNEAENIQKCLNAVTSQTYPKSKYEVLVVDNGSQDGTKEIARQFSTAYDNLEILIEDEQQGSYAARNTGIEQSSGAILAFLDGDCSPHQQWLERGVSTISGTGVDLVGGNVEFTYPNGGTAAERYDSFTNMQMKESISKRNVAKTVNLFVRQDVVEDVGPFPNHLISGGDVHWTKRATDAGYSLTFAHDVIGCHPARPFGELLKKQFRVGKGQIQVWMLDRISLRRVFALALWILVGFLPKPPHYLSQDLRRTGQTVTKAMFVRILVVAWCCRLAENAGRLSYILRSEEQ.

Belongs to the glycosyltransferase 2 family.

It is found in the cell membrane. The protein operates within cell surface structure biogenesis; S-layer biogenesis. Its function is as follows. Involved in the assembly of a N-linked pentasaccharide that decorates the S-layer glycoprotein and flagellins. Catalyzes the addition to the dolichol phosphate carrier of the hexuronic acid found at position 4 of the pentasaccharide. The protein is Glycosyltransferase AglE (aglE) of Haloferax volcanii (strain ATCC 29605 / DSM 3757 / JCM 8879 / NBRC 14742 / NCIMB 2012 / VKM B-1768 / DS2) (Halobacterium volcanii).